The sequence spans 333 residues: Holliday junction branch migration complex subunit RuvB (333 aa).

A large ATPase domain (RuvB-L) region spans residues 1 to 182; it reads MEERIVSAEA…FGVMARLEYY (182 aa). ATP contacts are provided by residues Leu21, Arg22, Gly63, Lys66, Thr67, Thr68, 129 to 131, Arg172, Tyr182, and Arg219; that span reads EDF. Mg(2+) is bound at residue Thr67. Residues 183-253 are small ATPAse domain (RuvB-S); that stretch reads KPEELAQIVE…RACSALEQLH (71 aa). The tract at residues 256–333 is head domain (RuvB-H); it reads PLGLDHIDDK…AHYGVEKQNG (78 aa). Residues Arg311 and Arg316 each contribute to the DNA site.

The protein belongs to the RuvB family. In terms of assembly, homohexamer. Forms an RuvA(8)-RuvB(12)-Holliday junction (HJ) complex. HJ DNA is sandwiched between 2 RuvA tetramers; dsDNA enters through RuvA and exits via RuvB. An RuvB hexamer assembles on each DNA strand where it exits the tetramer. Each RuvB hexamer is contacted by two RuvA subunits (via domain III) on 2 adjacent RuvB subunits; this complex drives branch migration. In the full resolvosome a probable DNA-RuvA(4)-RuvB(12)-RuvC(2) complex forms which resolves the HJ.

The protein resides in the cytoplasm. The catalysed reaction is ATP + H2O = ADP + phosphate + H(+). Its function is as follows. The RuvA-RuvB-RuvC complex processes Holliday junction (HJ) DNA during genetic recombination and DNA repair, while the RuvA-RuvB complex plays an important role in the rescue of blocked DNA replication forks via replication fork reversal (RFR). RuvA specifically binds to HJ cruciform DNA, conferring on it an open structure. The RuvB hexamer acts as an ATP-dependent pump, pulling dsDNA into and through the RuvAB complex. RuvB forms 2 homohexamers on either side of HJ DNA bound by 1 or 2 RuvA tetramers; 4 subunits per hexamer contact DNA at a time. Coordinated motions by a converter formed by DNA-disengaged RuvB subunits stimulates ATP hydrolysis and nucleotide exchange. Immobilization of the converter enables RuvB to convert the ATP-contained energy into a lever motion, pulling 2 nucleotides of DNA out of the RuvA tetramer per ATP hydrolyzed, thus driving DNA branch migration. The RuvB motors rotate together with the DNA substrate, which together with the progressing nucleotide cycle form the mechanistic basis for DNA recombination by continuous HJ branch migration. Branch migration allows RuvC to scan DNA until it finds its consensus sequence, where it cleaves and resolves cruciform DNA. In Shouchella clausii (strain KSM-K16) (Alkalihalobacillus clausii), this protein is Holliday junction branch migration complex subunit RuvB.